Reading from the N-terminus, the 583-residue chain is Hyaluronan synthase-related protein (583 aa).

Over 1 to 29 (MENTTDPENIPVSKPKYPTIRRILSQTFR) the chain is Cytoplasmic. Residues 30–50 (ILLLFSITTAYVLGYQALCHQ) traverse the membrane as a helical segment. Residues 51 to 52 (GL) are Extracellular-facing. The chain crosses the membrane as a helical span at residues 53 to 73 (LITFGLYGAAMLLHLLMQGIF). Residues 74–393 (ANLEIRRIEK…CNAQWWHQHH (320 aa)) are Cytoplasmic-facing. A helical membrane pass occupies residues 394–414 (IWMTYESATGIFFPFFVTAVL). Over 415–425 (IRLMYSSSLCN) the chain is Extracellular. The chain crosses the membrane as a helical span at residues 426–446 (IVWLFLCIQIMSLLLSLYASW). Residues 447–457 (QSKKLSMVLMS) are Cytoplasmic-facing. Residues 458 to 478 (LYSTLYIIWLLPCQLVALLTI) traverse the membrane as a helical segment. Residues 479 to 497 (AKSDWGTSGRKKVVNNYVP) are Extracellular-facing. A helical transmembrane segment spans residues 498–518 (LFSLSIWAAVLLGGLCYSMYI). Over 519–535 (GCRKDWSKPQANRELYH) the chain is Cytoplasmic. A helical transmembrane segment spans residues 536–556 (LLYGCAGYMAYWVLMTVIYCV). Topologically, residues 557-583 (SGSCCKMRSQAVPQTHDITSLSVSLLV) are extracellular.

It belongs to the NodC/HAS family.

The protein localises to the membrane. This Xenopus laevis (African clawed frog) protein is Hyaluronan synthase-related protein (has-rs).